The following is a 102-amino-acid chain: Putative pterin-4-alpha-carbinolamine dehydratase (102 aa).

This sequence belongs to the pterin-4-alpha-carbinolamine dehydratase family.

It carries out the reaction (4aS,6R)-4a-hydroxy-L-erythro-5,6,7,8-tetrahydrobiopterin = (6R)-L-erythro-6,7-dihydrobiopterin + H2O. This is Putative pterin-4-alpha-carbinolamine dehydratase from Burkholderia lata (strain ATCC 17760 / DSM 23089 / LMG 22485 / NCIMB 9086 / R18194 / 383).